A 395-amino-acid chain; its full sequence is uncharacterized protein (395 aa).

The protein belongs to the UDP-glycosyltransferase family.

This is an uncharacterized protein from Bacillus subtilis (strain 168).